Reading from the N-terminus, the 506-residue chain is Abscisic acid 8'-hydroxylase 2 (506 aa).

The chain crosses the membrane as a helical span at residues 3–23; the sequence is FLLFFVFVTAAVLCFVVPAFL. Position 437 (Cys-437) interacts with heme.

The protein belongs to the cytochrome P450 family. Heme is required as a cofactor. As to expression, in internodes and expanding leaves. Weak expression in seedlings.

The protein resides in the membrane. It carries out the reaction 2-cis-(+)-abscisate + reduced [NADPH--hemoprotein reductase] + O2 = (+)-8'-hydroxyabscisate + oxidized [NADPH--hemoprotein reductase] + H2O + H(+). Its pathway is plant hormone degradation; abscisic acid degradation. In terms of biological role, involved in the oxidative degradation of abscisic acid. The protein is Abscisic acid 8'-hydroxylase 2 (CYP707A6) of Oryza sativa subsp. indica (Rice).